A 247-amino-acid polypeptide reads, in one-letter code: MMDPIHQFNIEPIFTIGHIGGQEIAFTNSSAYMFLAVALTSLLMLGTGRRLVPGRMQSIAEISYEFVADTIRTTAGKEGMKFFPFVFSIFMLVTVSNLVGIIPYTFTISSHIIVTAALAFLVFFTVLIYGFYKNGLRFFKLFVPSGIPVVILPLVVTIEVISFLSRPVSHSVRLFANMLAGHITLKVFASFVTMLGAMGIVGVFGAVLPLALVVALTALELLVAFLQAYVFTILTCIYINDAIHPGH.

A run of 6 helical transmembrane segments spans residues 24-44 (IAFT…SLLM), 82-102 (FFPF…VGII), 112-132 (IIVT…YGFY), 141-161 (LFVP…IEVI), 194-214 (MLGA…ALVV), and 219-239 (LELL…CIYI).

The protein belongs to the ATPase A chain family. In terms of assembly, F-type ATPases have 2 components, CF(1) - the catalytic core - and CF(0) - the membrane proton channel. CF(1) has five subunits: alpha(3), beta(3), gamma(1), delta(1), epsilon(1). CF(0) has three main subunits: a(1), b(2) and c(9-12). The alpha and beta chains form an alternating ring which encloses part of the gamma chain. CF(1) is attached to CF(0) by a central stalk formed by the gamma and epsilon chains, while a peripheral stalk is formed by the delta and b chains.

The protein resides in the cell inner membrane. Its function is as follows. Key component of the proton channel; it plays a direct role in the translocation of protons across the membrane. The chain is ATP synthase subunit a from Nitrobacter winogradskyi (strain ATCC 25391 / DSM 10237 / CIP 104748 / NCIMB 11846 / Nb-255).